The chain runs to 205 residues: Endoplasmic reticulum membrane protein complex subunit 10 (205 aa).

An N-terminal signal peptide occupies residues 1–17 (MLVRLLRVILLASMVFC). Topologically, residues 18 to 172 (ADILQLSYSD…VKEVSWFQKN (155 aa)) are lumenal. An N-linked (GlcNAc...) asparagine glycan is attached at asparagine 47. The chain crosses the membrane as a helical span at residues 173–190 (WKMLLLGLLIYNFVAGSA). At 191–205 (KKQQQGGAGADQKTE) the chain is on the cytoplasmic side.

Component of the ER membrane protein complex (EMC).

The protein resides in the endoplasmic reticulum membrane. Its function is as follows. Part of the endoplasmic reticulum membrane protein complex (EMC) that enables the energy-independent insertion into endoplasmic reticulum membranes of newly synthesized membrane proteins. Preferentially accommodates proteins with transmembrane domains that are weakly hydrophobic or contain destabilizing features such as charged and aromatic residues. Involved in the cotranslational insertion of multi-pass membrane proteins in which stop-transfer membrane-anchor sequences become ER membrane spanning helices. It is also required for the post-translational insertion of tail-anchored/TA proteins in endoplasmic reticulum membranes. By mediating the proper cotranslational insertion of N-terminal transmembrane domains in an N-exo topology, with translocated N-terminus in the lumen of the ER, controls the topology of multi-pass membrane proteins. This chain is Endoplasmic reticulum membrane protein complex subunit 10, found in Saccharomyces cerevisiae (strain ATCC 204508 / S288c) (Baker's yeast).